The primary structure comprises 160 residues: UPF0225 protein PputW619_1140 (160 aa).

The protein belongs to the UPF0225 family.

This Pseudomonas putida (strain W619) protein is UPF0225 protein PputW619_1140.